The sequence spans 3259 residues: Striated muscle-specific serine/threonine-protein kinase (3259 aa).

A disordered region spans residues 1 to 30; it reads MQKARGTRGEDAGTRAPPSPGVPPKRAKVG. At arginine 33 the chain carries Omega-N-methylarginine. The Ig-like 1 domain maps to 45-126; sequence PVFLRPLKNA…GKASCEAVLT (82 aa). Serine 141 is subject to Phosphoserine. 4 disordered regions span residues 155–185, 198–226, 278–716, and 816–880; these read RAFS…TSEE, EQEA…GPRH, PSGL…DDSY, and VRPG…KVSL. The segment covering 158 to 185 has biased composition (polar residues); that stretch reads STPTGGSDTLVGTSLDTPPTSVTGTSEE. The span at 301 to 317 shows a compositional bias: pro residues; the sequence is PALPPPSKSALLPPPSP. Serine 368 and serine 375 each carry phosphoserine. Threonine 379 is subject to Phosphothreonine. A phosphoserine mark is found at serine 382 and serine 385. Basic and acidic residues predominate over residues 404–422; it reads ILDKLQFFEERRRSLERSD. Serine 423 carries the phosphoserine modification. Phosphothreonine is present on threonine 453. A phosphoserine mark is found at serine 457, serine 463, serine 493, serine 511, serine 531, and serine 554. Positions 459–473 are enriched in basic and acidic residues; it reads EELRSPRGSVAERRR. Positions 510-522 are enriched in basic and acidic residues; sequence TSREELVRSHESL. 2 stretches are compositionally biased toward basic and acidic residues: residues 624 to 638 and 663 to 680; these read PESR…KREP and EKNR…RGPE. The region spanning 727-817 is the Ig-like 2 domain; that stretch reads PVFEIPLQNM…ASCASSLAVR (91 aa). Over residues 820–830 the composition is skewed to polar residues; sequence ASTSPFSSPIT. 3 Ig-like domains span residues 874-963, 968-1056, and 1069-1157; these read PTFK…ARLE, PESR…DELT, and PLFT…AQLY. An intrachain disulfide couples cysteine 994 to cysteine 1046. 2 positions are modified to phosphoserine: serine 1133 and serine 1177. Residues 1162-1185 form a disordered region; sequence RTAASGPSSKLEKMPSIPEEPEHG. An Ig-like 6 domain is found at 1193 to 1283; the sequence is PDFLRPLQDL…AACYAHLYVT (91 aa). One can recognise a Fibronectin type-III 1 domain in the interval 1290 to 1387; sequence PDGAPQVVAV…PSEPVQLLEH (98 aa). A compositionally biased stretch (low complexity) spans 1367–1379; that stretch reads SSGKSSSKPSAPS. The segment at 1367 to 1386 is disordered; sequence SSGKSSSKPSAPSEPVQLLE. In terms of domain architecture, Ig-like 7 spans 1490–1578; it reads PRFESIMEDV…GEVSCKAELS (89 aa). One can recognise a Protein kinase 1 domain in the interval 1606 to 1859; it reads YDIHQEIGRG…AEETLEHPWF (254 aa). ATP-binding positions include 1612-1620 and lysine 1635; that span reads IGRGAFSYL. Aspartate 1724 acts as the Proton acceptor in catalysis. Disordered stretches follow at residues 1913–2244, 2336–2451, and 2463–2562; these read MPRR…QMPA, AKFK…SPVL, and RLSS…SQPN. Low complexity predominate over residues 1918–1927; the sequence is PPSGGLSSSS. Serine 1993, serine 2004, serine 2019, serine 2020, and serine 2042 each carry phosphoserine. Over residues 2009 to 2019 the composition is skewed to basic and acidic residues; it reads SPRRPELRRGS. Arginine 2060 carries the asymmetric dimethylarginine; alternate modification. Arginine 2060 bears the Omega-N-methylarginine; alternate mark. A compositionally biased stretch (low complexity) spans 2069 to 2081; the sequence is AQRLQALRQRLLR. Phosphoserine is present on residues serine 2114 and serine 2135. Residue arginine 2144 is modified to Omega-N-methylarginine. Positions 2168–2179 are enriched in polar residues; sequence ESPSLSALSETQ. The segment covering 2180 to 2189 has biased composition (pro residues); that stretch reads PPSPALPSAP. Phosphoserine occurs at positions 2182 and 2207. Positions 2193–2207 are enriched in polar residues; sequence ITKSPEPSAATSRDS. The span at 2208–2218 shows a compositional bias: pro residues; it reads PQPPAPQPVPE. Residues 2219-2229 are compositionally biased toward basic and acidic residues; it reads KIPEPKPEPVR. A compositionally biased stretch (low complexity) spans 2230-2244; it reads AAKPAQPPLALQMPA. Basic and acidic residues predominate over residues 2336-2345; sequence AKFKRSRESP. Residues 2346–2355 show a composition bias toward low complexity; the sequence is LSRGLRLLSR. The span at 2356–2372 shows a compositional bias: basic and acidic residues; sequence SRSEERGPFRGAEDDGI. Serine 2376 carries the post-translational modification Phosphoserine. A Phosphothreonine modification is found at threonine 2380. Over residues 2384–2395 the composition is skewed to basic and acidic residues; the sequence is LVRRPERSRSVQ. Phosphoserine occurs at positions 2410, 2414, 2438, 2439, 2444, and 2448. A compositionally biased stretch (low complexity) spans 2463 to 2484; that stretch reads RLSSRLQRSGSSEDSGGASGRS. The segment covering 2510–2520 has biased composition (polar residues); that stretch reads QLASQTGATTP. Phosphoserine occurs at positions 2521 and 2524. Positions 2521-2540 are enriched in low complexity; it reads SAESLGSEASGTSGSSAPGE. A compositionally biased stretch (basic residues) spans 2543 to 2554; sequence SRHRWGLSRLRK. Serine 2559 carries the post-translational modification Phosphoserine. The Ig-like 8 domain maps to 2583-2673; that stretch reads PPVFHIKLKD…GSITSSCTVA (91 aa). Cysteine 2605 and cysteine 2657 form a disulfide bridge. The 95-residue stretch at 2680-2774 folds into the Fibronectin type-III 2 domain; that stretch reads KLAPPEVPQT…KVFIRGTQDS (95 aa). Threonine 2771 is subject to Phosphothreonine. Disordered stretches follow at residues 2771-2829 and 2855-2957; these read TQDS…MSAN and TQQA…PQKP. At serine 2774 the chain carries Phosphoserine. Positions 2793-2810 are enriched in pro residues; that stretch reads RAPPPDSPTSLVPTPPLA. Positions 2814-2828 are enriched in low complexity; sequence SQASTLSPSTSSMSA. The 107-residue stretch at 2859–2965 folds into the Fibronectin type-III 3 domain; sequence EPSPPSILVT…KPYTFLEEKA (107 aa). Residues 2880–2907 are compositionally biased toward polar residues; that stretch reads GTLTPTSSPQGVKPAPSSSSLYMVTSFV. Over residues 2910-2924 the composition is skewed to pro residues; the sequence is PPDPQPPAPEPPPEP. A compositionally biased stretch (polar residues) spans 2940–2950; sequence SSPTPESTTLR. Serine 2941 is modified (phosphoserine). The Protein kinase 2 domain occupies 2958–3210; the sequence is YTFLEEKARG…LQDCLAHPWL (253 aa). ATP-binding positions include 2964–2972 and lysine 2987; that span reads KARGRFGVV. The Proton acceptor role is filled by aspartate 3077.

The protein belongs to the protein kinase superfamily. CAMK Ser/Thr protein kinase family. In terms of assembly, interacts with MTM1. May be autophosphorylated. As to expression, isoform 2 is highly expressed in differentiated arterial smooth muscle cells (ASMC) in the medial layer of the aorta. Weakly detected in brain and testis and to a lesser extent in organs rich in striated muscle or visceral smooth muscle.

Its subcellular location is the nucleus. It catalyses the reaction L-seryl-[protein] + ATP = O-phospho-L-seryl-[protein] + ADP + H(+). It carries out the reaction L-threonyl-[protein] + ATP = O-phospho-L-threonyl-[protein] + ADP + H(+). Its function is as follows. Isoform 2 may have a role in regulating the growth and differentiation of arterial smooth muscle cells. This chain is Striated muscle-specific serine/threonine-protein kinase (Speg), found in Rattus norvegicus (Rat).